Here is an 808-residue protein sequence, read N- to C-terminus: Phenylalanine--tRNA ligase beta subunit (808 aa).

The 110-residue stretch at 40–149 (RPELDFVKIV…DQAEVGKTIR (110 aa)) folds into the tRNA-binding domain. A B5 domain is found at 407 to 484 (HKEVRIHTDI…RTKGYDTIQV (78 aa)). D462, D468, E471, and E472 together coordinate Mg(2+). Residues 716–808 (SQFPEAEIDL…LAGKNGFVLR (93 aa)) enclose the FDX-ACB domain.

Belongs to the phenylalanyl-tRNA synthetase beta subunit family. Type 1 subfamily. In terms of assembly, tetramer of two alpha and two beta subunits. Mg(2+) serves as cofactor.

It localises to the cytoplasm. The enzyme catalyses tRNA(Phe) + L-phenylalanine + ATP = L-phenylalanyl-tRNA(Phe) + AMP + diphosphate + H(+). This Leptospira interrogans serogroup Icterohaemorrhagiae serovar copenhageni (strain Fiocruz L1-130) protein is Phenylalanine--tRNA ligase beta subunit.